The chain runs to 482 residues: Probable cytosol aminopeptidase (482 aa).

Residues Lys251 and Asp256 each coordinate Mn(2+). Lys263 is an active-site residue. 3 residues coordinate Mn(2+): Asp274, Asp333, and Glu335. Residue Arg337 is part of the active site.

The protein belongs to the peptidase M17 family. Mn(2+) is required as a cofactor.

The protein resides in the cytoplasm. The catalysed reaction is Release of an N-terminal amino acid, Xaa-|-Yaa-, in which Xaa is preferably Leu, but may be other amino acids including Pro although not Arg or Lys, and Yaa may be Pro. Amino acid amides and methyl esters are also readily hydrolyzed, but rates on arylamides are exceedingly low.. It carries out the reaction Release of an N-terminal amino acid, preferentially leucine, but not glutamic or aspartic acids.. In terms of biological role, presumably involved in the processing and regular turnover of intracellular proteins. Catalyzes the removal of unsubstituted N-terminal amino acids from various peptides. The protein is Probable cytosol aminopeptidase of Acinetobacter baylyi (strain ATCC 33305 / BD413 / ADP1).